The following is a 253-amino-acid chain: 5-oxoprolinase subunit A (253 aa).

The protein belongs to the LamB/PxpA family. As to quaternary structure, forms a complex composed of PxpA, PxpB and PxpC.

The enzyme catalyses 5-oxo-L-proline + ATP + 2 H2O = L-glutamate + ADP + phosphate + H(+). In terms of biological role, catalyzes the cleavage of 5-oxoproline to form L-glutamate coupled to the hydrolysis of ATP to ADP and inorganic phosphate. The protein is 5-oxoprolinase subunit A of Shouchella clausii (strain KSM-K16) (Alkalihalobacillus clausii).